The following is a 419-amino-acid chain: MNIFDELKERGLVFQTTDEDALRKALEEGSVSYYTGYDPTADSLHLGHLVAILTSRRLQLAGHKPYALVGGATGLIGDPSFKDVERSLQTKKTVVSWGNKIRGQLSNFLEFETGDNKAVLVNNYDWFSNISFIDFLRDVGKYFTVNYMMSKESVKKRIETGISYTEFAYQIMQGYDFYELNKNYNVTLQIGGSDQWGNMTAGTELIRRKSNGVSHVMTVPLITDSTGKKFGKSEGNAVWLDADKTSPYEMYQFWLNVMDADAVRFLKIFTFLSLKEIEDIRIQFEEAPHQRLAQKTLAREVVTLVHGEKAYKEAVNITEQLFAGNIKGLSVKELKQGLRGVPNYHVQTEDNLNIIDLLVTSGVVNSKRQAREDVSNGAIYINGDRIQDLEYTISENDKLENEITVIRRGKKKYFVLNFK.

Residue Tyr34 participates in L-tyrosine binding. A 'HIGH' region motif is present at residues 39–48 (PTADSLHLGH). Residues Tyr169 and Gln173 each coordinate L-tyrosine. The short motif at 229–233 (KFGKS) is the 'KMSKS' region element. ATP is bound at residue Lys232. One can recognise an S4 RNA-binding domain in the interval 352 to 419 (LNIIDLLVTS…KKKYFVLNFK (68 aa)).

The protein belongs to the class-I aminoacyl-tRNA synthetase family. TyrS type 1 subfamily. Homodimer.

It is found in the cytoplasm. The catalysed reaction is tRNA(Tyr) + L-tyrosine + ATP = L-tyrosyl-tRNA(Tyr) + AMP + diphosphate + H(+). Its function is as follows. Catalyzes the attachment of tyrosine to tRNA(Tyr) in a two-step reaction: tyrosine is first activated by ATP to form Tyr-AMP and then transferred to the acceptor end of tRNA(Tyr). This Streptococcus agalactiae serotype V (strain ATCC BAA-611 / 2603 V/R) protein is Tyrosine--tRNA ligase.